Reading from the N-terminus, the 263-residue chain is Transcription factor 19-like protein (263 aa).

Residues 31 to 88 (YGLGCRADLCDVALRPQQEPGLISGVHAELHAELQGDDWRVSLEDHSSQGTLVNNVRL) form the FHA domain. Ser-78 is subject to Phosphoserine. 2 disordered regions span residues 140–164 (SKGE…PLST) and 189–225 (LTFS…RKSA).

The protein resides in the nucleus. Potential transcription factor that may play a role in the regulation of genes involved in cell cycle G1/S transition. May bind to regulatory elements of genes, including the promoter of the transcription factor FOXO1. This Mus musculus (Mouse) protein is Transcription factor 19-like protein (Tcf19).